A 186-amino-acid polypeptide reads, in one-letter code: Large ribosomal subunit protein uL22 (186 aa).

The tract at residues 161–186 is disordered; it reads VDDEPAKKKLSKKKLQRQKEKMLRSE. Residues 177–186 show a composition bias toward basic and acidic residues; it reads RQKEKMLRSE.

This sequence belongs to the universal ribosomal protein uL22 family.

The sequence is that of Large ribosomal subunit protein uL22 (RpL17) from Drosophila pseudoobscura pseudoobscura (Fruit fly).